Here is a 68-residue protein sequence, read N- to C-terminus: uncharacterized protein (68 aa).

This is an uncharacterized protein from Enterobacteria phage T4 (Bacteriophage T4).